A 382-amino-acid polypeptide reads, in one-letter code: Succinyl-diaminopimelate desuccinylase (382 aa).

Residue H70 participates in Zn(2+) binding. D72 is an active-site residue. A Zn(2+)-binding site is contributed by D103. E137 acts as the Proton acceptor in catalysis. Zn(2+) is bound by residues E138, E166, and H355.

It belongs to the peptidase M20A family. DapE subfamily. As to quaternary structure, homodimer. The cofactor is Zn(2+). Co(2+) serves as cofactor.

The enzyme catalyses N-succinyl-(2S,6S)-2,6-diaminopimelate + H2O = (2S,6S)-2,6-diaminopimelate + succinate. Its pathway is amino-acid biosynthesis; L-lysine biosynthesis via DAP pathway; LL-2,6-diaminopimelate from (S)-tetrahydrodipicolinate (succinylase route): step 3/3. Functionally, catalyzes the hydrolysis of N-succinyl-L,L-diaminopimelic acid (SDAP), forming succinate and LL-2,6-diaminopimelate (DAP), an intermediate involved in the bacterial biosynthesis of lysine and meso-diaminopimelic acid, an essential component of bacterial cell walls. The protein is Succinyl-diaminopimelate desuccinylase of Paracoccus denitrificans (strain Pd 1222).